Reading from the N-terminus, the 246-residue chain is 5-oxoprolinase subunit A (246 aa).

It belongs to the LamB/PxpA family. As to quaternary structure, forms a complex composed of PxpA, PxpB and PxpC.

The enzyme catalyses 5-oxo-L-proline + ATP + 2 H2O = L-glutamate + ADP + phosphate + H(+). Catalyzes the cleavage of 5-oxoproline to form L-glutamate coupled to the hydrolysis of ATP to ADP and inorganic phosphate. The protein is 5-oxoprolinase subunit A of Cupriavidus metallidurans (strain ATCC 43123 / DSM 2839 / NBRC 102507 / CH34) (Ralstonia metallidurans).